A 433-amino-acid polypeptide reads, in one-letter code: Probable non-inhibitory serpin-Z5 (433 aa).

Residues 1 to 12 (MEPKEKKQKLDT) are compositionally biased toward basic and acidic residues. The segment at 1–43 (MEPKEKKQKLDTSEVASPSLSKTHLKKKKTKKQKIRKSQEITS) is disordered. The span at 23-36 (THLKKKKTKKQKIR) shows a compositional bias: basic residues. Positions 380 to 404 (GTEAVTFTAFRSAYLGCALVKPIDF) are RCL.

It belongs to the serpin family. Weakly expressed during seedling development.

This chain is Probable non-inhibitory serpin-Z5, found in Arabidopsis thaliana (Mouse-ear cress).